The following is a 291-amino-acid chain: ATP synthase gamma chain (291 aa).

Belongs to the ATPase gamma chain family. F-type ATPases have 2 components, CF(1) - the catalytic core - and CF(0) - the membrane proton channel. CF(1) has five subunits: alpha(3), beta(3), gamma(1), delta(1), epsilon(1). CF(0) has three main subunits: a, b and c.

The protein localises to the cell inner membrane. Its function is as follows. Produces ATP from ADP in the presence of a proton gradient across the membrane. The gamma chain is believed to be important in regulating ATPase activity and the flow of protons through the CF(0) complex. This Neisseria gonorrhoeae (strain NCCP11945) protein is ATP synthase gamma chain.